Reading from the N-terminus, the 391-residue chain is Nucleosome assembly protein 1-like 1 (391 aa).

A compositionally biased stretch (basic and acidic residues) spans 1–10; sequence MADIDNKEQS. The segment at 1–32 is disordered; sequence MADIDNKEQSELDQDLDDVEEVEEEETGEETK. At A2 the chain carries N-acetylalanine. Position 10 is a phosphoserine (S10). Over residues 11–28 the composition is skewed to acidic residues; the sequence is ELDQDLDDVEEVEEEETG. T62 and T64 each carry phosphothreonine. At S69 the chain carries Phosphoserine. An N6-acetyllysine modification is found at K116. The NAP1L motif motif lies at 125–150; it reads YEPTEEECEWKPDEEDEISEELKEKA. A compositionally biased stretch (acidic residues) spans 132 to 143; sequence CEWKPDEEDEIS. Positions 132-163 are disordered; that stretch reads CEWKPDEEDEISEELKEKAKVEDEKKDEEKED. S143 carries the phosphoserine modification. A compositionally biased stretch (basic and acidic residues) spans 144–163; sequence EELKEKAKVEDEKKDEEKED. The short motif at 273–279 is the Nuclear localization signal element; the sequence is IKKKQKH. The interval 345–391 is disordered; that stretch reads EAIEDDDDDYDEEGEEADEEGEEEGDEENDPDYDPKKDQNPAECKQQ. Over residues 346-376 the composition is skewed to acidic residues; that stretch reads AIEDDDDDYDEEGEEADEEGEEEGDEENDPD. 5-glutamyl polyglycine occurs at positions 359 and 360. A compositionally biased stretch (basic and acidic residues) spans 377 to 391; that stretch reads YDPKKDQNPAECKQQ. Residue C388 is modified to Cysteine methyl ester. The S-farnesyl cysteine moiety is linked to residue C388. Residues 389 to 391 constitute a propeptide, removed in mature form; that stretch reads KQQ.

Belongs to the nucleosome assembly protein (NAP) family. In terms of assembly, homodimer. The dimer binds strongly and sequentially to single and double H2A-H2B heterodimers. Interacts with ERCC6; this interaction increases ERCC6 processivity. Interacts with RAD54. Interacts with SETD1A. In terms of processing, polyglycylated by TTLL10 on glutamate residues, resulting in polyglycine chains on the gamma-carboxyl group. Both polyglutamylation and polyglycylation modifications can coexist on the same protein on adjacent residues, and lowering polyglycylation levels increases polyglutamylation, and reciprocally. Polyglutamylated by TTLL4 on glutamate residues, resulting in polyglutamate chains on the gamma-carboxyl group. Both polyglutamylation and polyglycylation modifications can coexist on the same protein on adjacent residues, and lowering polyglycylation levels increases polyglutamylation, and reciprocally.

The protein resides in the nucleus. It localises to the melanosome. Its subcellular location is the cytoplasm. Histone chaperone that plays a role in the nuclear import of H2A-H2B and nucleosome assembly. Also participates in several important DNA repair mechanisms: greatly enhances ERCC6-mediated chromatin remodeling which is essential for transcription-coupled nucleotide excision DNA repair. Also stimulates homologous recombination (HR) by RAD51 and RAD54 which is essential in mitotic DNA double strand break (DSB) repair. Plays a key role in the regulation of embryonic neurogenesis. Promotes the proliferation of neural progenitors and inhibits neuronal differentiation during cortical development. Regulates neurogenesis via the modulation of RASSF10; regulates RASSF10 expression by promoting SETD1A-mediated H3K4 methylation at the RASSF10 promoter. The chain is Nucleosome assembly protein 1-like 1 (NAP1L1) from Bos taurus (Bovine).